The chain runs to 122 residues: Ribonuclease P protein component (122 aa).

It belongs to the RnpA family. Consists of a catalytic RNA component (M1 or rnpB) and a protein subunit.

The catalysed reaction is Endonucleolytic cleavage of RNA, removing 5'-extranucleotides from tRNA precursor.. Its function is as follows. RNaseP catalyzes the removal of the 5'-leader sequence from pre-tRNA to produce the mature 5'-terminus. It can also cleave other RNA substrates such as 4.5S RNA. The protein component plays an auxiliary but essential role in vivo by binding to the 5'-leader sequence and broadening the substrate specificity of the ribozyme. The chain is Ribonuclease P protein component from Shouchella clausii (strain KSM-K16) (Alkalihalobacillus clausii).